Consider the following 240-residue polypeptide: Large ribosomal subunit protein uL1 (240 aa).

This sequence belongs to the universal ribosomal protein uL1 family. Part of the 50S ribosomal subunit.

In terms of biological role, binds directly to 23S rRNA. The L1 stalk is quite mobile in the ribosome, and is involved in E site tRNA release. Protein L1 is also a translational repressor protein, it controls the translation of the L11 operon by binding to its mRNA. The sequence is that of Large ribosomal subunit protein uL1 from Streptomyces griseus subsp. griseus (strain JCM 4626 / CBS 651.72 / NBRC 13350 / KCC S-0626 / ISP 5235).